The chain runs to 1284 residues: ATP-dependent helicase fft2 (1284 aa).

Polar residues-rich tracts occupy residues 1-10 and 20-57; these read MLPYNSNYLS and ENPQ…AMYG. Disordered stretches follow at residues 1 to 57, 185 to 252, 317 to 339, 353 to 388, and 446 to 465; these read MLPY…AMYG, AQPP…LPPV, KQSP…QSQK, STQA…EEPE, and PDDV…KNPM. A compositionally biased stretch (low complexity) spans 201-241; it reads RSNSRSSARSTARSAPRSTQRSRSSSANPVTTPPVNNTLLT. Composition is skewed to polar residues over residues 320–339 and 353–372; these read PVAS…QSQK and STQA…ASKK. A Phosphoserine modification is found at S323. The segment covering 376 to 388 has biased composition (acidic residues); sequence EEDEFYDSEEEPE. A Phosphoserine modification is found at S383. The region spanning 562–730 is the Helicase ATP-binding domain; the sequence is HLLYQQKLSG…VSLLAFILPN (169 aa). 575-582 provides a ligand contact to ATP; sequence DEMGLGKT. Residues 681–684 carry the DEGH box motif; sequence DEGH. A disordered region spans residues 816–839; it reads QQLRRDDKRNKRSKNDEESDGKSL. Residues 818–831 are compositionally biased toward basic and acidic residues; it reads LRRDDKRNKRSKND. One can recognise a Helicase C-terminal domain in the interval 928–1079; the sequence is VLKELLPKMK…SLSSDGKDRE (152 aa). Residues 1088 to 1284 are disordered; it reads DMLDEENNGN…SEVDNNAAKD (197 aa). The span at 1095–1107 shows a compositional bias: polar residues; it reads NGNNTKPEITGNE. A compositionally biased stretch (basic and acidic residues) spans 1143-1177; sequence EKTDLADGDEKANIKTEMKSETVEGDNKELRETMK. Residues 1180–1194 are compositionally biased toward polar residues; sequence NVQTDSNAAVPSSKS. Basic and acidic residues-rich tracts occupy residues 1243–1256 and 1266–1284; these read QLEK…KKPD and EEEK…AAKD.

It belongs to the SNF2/RAD54 helicase family.

The protein resides in the cytoplasm. It localises to the nucleus. It catalyses the reaction ATP + H2O = ADP + phosphate + H(+). DNA helicase that possesses intrinsic ATP-dependent nucleosome-remodeling activity and is required for heterochromatin organization. The chain is ATP-dependent helicase fft2 (fft2) from Schizosaccharomyces pombe (strain 972 / ATCC 24843) (Fission yeast).